The primary structure comprises 149 residues: D-aminoacyl-tRNA deacylase (149 aa).

The short motif at 137–138 (GP) is the Gly-cisPro motif, important for rejection of L-amino acids element.

This sequence belongs to the DTD family. As to quaternary structure, homodimer.

It localises to the cytoplasm. It catalyses the reaction glycyl-tRNA(Ala) + H2O = tRNA(Ala) + glycine + H(+). The enzyme catalyses a D-aminoacyl-tRNA + H2O = a tRNA + a D-alpha-amino acid + H(+). In terms of biological role, an aminoacyl-tRNA editing enzyme that deacylates mischarged D-aminoacyl-tRNAs. Also deacylates mischarged glycyl-tRNA(Ala), protecting cells against glycine mischarging by AlaRS. Acts via tRNA-based rather than protein-based catalysis; rejects L-amino acids rather than detecting D-amino acids in the active site. By recycling D-aminoacyl-tRNA to D-amino acids and free tRNA molecules, this enzyme counteracts the toxicity associated with the formation of D-aminoacyl-tRNA entities in vivo and helps enforce protein L-homochirality. In Thermoanaerobacter pseudethanolicus (strain ATCC 33223 / 39E) (Clostridium thermohydrosulfuricum), this protein is D-aminoacyl-tRNA deacylase.